The primary structure comprises 118 residues: Large ribosomal subunit protein bL20 (118 aa).

Belongs to the bacterial ribosomal protein bL20 family.

Its function is as follows. Binds directly to 23S ribosomal RNA and is necessary for the in vitro assembly process of the 50S ribosomal subunit. It is not involved in the protein synthesizing functions of that subunit. This chain is Large ribosomal subunit protein bL20, found in Macrococcus caseolyticus (strain JCSC5402) (Macrococcoides caseolyticum).